A 331-amino-acid chain; its full sequence is DNA-directed RNA polymerase subunit alpha (331 aa).

The tract at residues 1–246 (MMQTSRTLHN…GLFSPLQEVS (246 aa)) is alpha N-terminal domain (alpha-NTD). An alpha C-terminal domain (alpha-CTD) region spans residues 256 to 331 (AEDNQKNQIP…LTLPRERSKT (76 aa)).

Belongs to the RNA polymerase alpha chain family. In terms of assembly, in cyanobacteria the RNAP catalytic core is composed of 2 alpha, 1 beta, 1 beta', 1 gamma and 1 omega subunit. When a sigma factor is associated with the core the holoenzyme is formed, which can initiate transcription.

It carries out the reaction RNA(n) + a ribonucleoside 5'-triphosphate = RNA(n+1) + diphosphate. In terms of biological role, DNA-dependent RNA polymerase catalyzes the transcription of DNA into RNA using the four ribonucleoside triphosphates as substrates. The chain is DNA-directed RNA polymerase subunit alpha from Synechococcus sp. (strain JA-3-3Ab) (Cyanobacteria bacterium Yellowstone A-Prime).